The following is a 322-amino-acid chain: MTSNFFPYKEGTATFLIDPYVRVYPIAILMGMIISILTVAFFWRKEKFNFDHFFALLFIIIPSSIIGARLWFVFERLIYNPQNPFPGSAWYAIWEGGLSIQGGVALPAILSLVYIYFKRDYIDYRKALSMILPTVLIGQAIGRWGNFANHEVYGKIDPTGQSSLIFGEWLARHMFIYNANESAASAAFRYPLFLYESISSIIGYIIIVWIIQERNLLKPGSNGGLYFVYYGTVRLAMEPLREESYFYYSLAAMFSILIGGMMMIYFEIWANPSRYVKTKIGKFRYQYDWTKVVVDKKDKKIKFQSNNNKNKTEGKIKKYVTK.

Helical transmembrane passes span 23 to 43 (VYPIAILMGMIISILTVAFFW), 53 to 73 (FFALLFIIIPSSIIGARLWFV), and 97 to 117 (GLSIQGGVALPAILSLVYIYF). Arg-143 contributes to the a 1,2-diacyl-sn-glycero-3-phospho-(1'-sn-glycerol) binding site. Helical transmembrane passes span 191–211 (PLFLYESISSIIGYIIIVWII) and 250–270 (LAAMFSILIGGMMMIYFEIWA).

It belongs to the Lgt family.

The protein localises to the cell membrane. The enzyme catalyses L-cysteinyl-[prolipoprotein] + a 1,2-diacyl-sn-glycero-3-phospho-(1'-sn-glycerol) = an S-1,2-diacyl-sn-glyceryl-L-cysteinyl-[prolipoprotein] + sn-glycerol 1-phosphate + H(+). It participates in protein modification; lipoprotein biosynthesis (diacylglyceryl transfer). Functionally, catalyzes the transfer of the diacylglyceryl group from phosphatidylglycerol to the sulfhydryl group of the N-terminal cysteine of a prolipoprotein, the first step in the formation of mature lipoproteins. The chain is Phosphatidylglycerol--prolipoprotein diacylglyceryl transferase from Mycoplasmopsis pulmonis (strain UAB CTIP) (Mycoplasma pulmonis).